The following is a 195-amino-acid chain: U8 snoRNA-decapping enzyme (195 aa).

The Nudix hydrolase domain occupies Asp18 to Glu173. Positions 24, 50, and 57 each coordinate substrate. Mn(2+) contacts are provided by Gly59, Glu76, Glu80, and His99. The Nudix box motif lies at Phe61–Gly82. Gln170 contacts substrate. Glu173 is a Mn(2+) binding site.

This sequence belongs to the Nudix hydrolase family. NUDT16 subfamily. In terms of assembly, homodimer. Mg(2+) serves as cofactor. Mn(2+) is required as a cofactor. It depends on Co(2+) as a cofactor. Expressed in brain, testis, spleen, lung, heart, liver, kidney and muscle (at protein level).

Its subcellular location is the nucleus. The protein resides in the nucleolus. It is found in the nucleoplasm. The protein localises to the cytoplasm. It carries out the reaction a 5'-end (N(7)-methyl 5'-triphosphoguanosine)-ribonucleoside in mRNA + H2O = N(7)-methyl-GDP + a 5'-end phospho-ribonucleoside in mRNA + 2 H(+). It catalyses the reaction IDP + H2O = IMP + phosphate + H(+). The enzyme catalyses dIDP + H2O = dIMP + phosphate + H(+). The catalysed reaction is a 5'-end NAD(+)-phospho-ribonucleoside in mRNA + H2O = a 5'-end phospho-ribonucleoside in mRNA + NAD(+) + H(+). It carries out the reaction a 5'-end FAD-phospho-ribonucleoside in mRNA + H2O = a 5'-end phospho-adenosine-phospho-ribonucleoside in mRNA + FMN + 2 H(+). It catalyses the reaction a 5'-end CoA-ribonucleoside in mRNA + H2O = a 5'-end phospho-adenosine-phospho-ribonucleoside in mRNA + (R)-4'-phosphopantetheine + 2 H(+). Functionally, RNA-binding and decapping enzyme that catalyzes the cleavage of the cap structure of snoRNAs and mRNAs in a metal-dependent manner. Part of the U8 snoRNP complex that is required for the accumulation of mature 5.8S and 28S rRNA. Has diphosphatase activity and removes m7G and/or m227G caps from U8 snoRNA and leaves a 5'monophosphate on the RNA. Also catalyzes the cleavage of the cap structure on mRNAs. Does not hydrolyze cap analog structures like 7-methylguanosine nucleoside triphosphate (m7GpppG). Also hydrolysis m7G- and m227G U3-capped RNAs but with less efficiencies. Has broad substrate specificity with manganese or cobalt as cofactor and can act on various RNA species. Binds to the U8 snoRNA; metal is not required for RNA-binding. May play a role in the regulation of snoRNAs and mRNAs degradation. Also acts as a phosphatase; hydrolyzes the non-canonical purine nucleotides inosine diphosphate (IDP) and deoxyinosine diphosphate (dITP) as well as guanosine diphosphate (GDP), deoxyguanosine diphosphate (dGDP), xanthine diphosphate (XDP), inosine triphosphate (ITP) and deoxyinosine triphosphate (ITP) to their respective monophosphate derivatives and does not distinguish between the deoxy- and ribose forms. The order of activity with different substrates is IDP &gt; dIDP &gt;&gt; GDP = dGDP &gt; XDP = ITP = dITP. Binds strongly to GTP, ITP and XTP. Participates in the hydrolysis of dIDP/IDP and probably excludes non-canonical purines from RNA and DNA precursor pools, thus preventing their incorporation into RNA and DNA and avoiding chromosomal lesions. Exhibits decapping activity towards NAD-capped RNAs and FAD-capped RNAs. Exhibits decapping activity towards dpCoA-capped RNAs in vitro. This Mus musculus (Mouse) protein is U8 snoRNA-decapping enzyme (Nudt16).